A 296-amino-acid chain; its full sequence is F-box only protein 2 (296 aa).

Positions 1–41 are disordered; it reads MDGDGDPESVGQPEEASPEEQPEEASAEEERPEDQQEEEAA. Residues 16–40 show a composition bias toward acidic residues; the sequence is ASPEEQPEEASAEEERPEDQQEEEA. Residues 44–91 enclose the F-box domain; that stretch reads AAYLDELPEPLLLRVLAALPAAELVQACRLVCLRWKELVDGAPLWLLK. The region spanning 113–296 is the FBA domain; that stretch reads FYFLSKRRRN…VTNSSVWVEP (184 aa). A carbohydrate is bound by residues 210–212 and 278–279; these read RSD and YW.

In terms of assembly, component of the SCF(FBXO2) complex consisting of CUL1, RBX1, SKP1 and FBXO2. Predominantly detected as heterodimer with SKP1; the heterodimer with SKP1 is not part of the SCF(FBXO2) complex.

It is found in the cytoplasm. Its subcellular location is the microsome membrane. Its pathway is protein modification; protein ubiquitination. Functionally, substrate recognition component of a SCF (SKP1-CUL1-F-box protein) E3 ubiquitin-protein ligase complex that mediates the ubiquitination and subsequent proteasomal degradation of target proteins. Involved in the endoplasmic reticulum-associated degradation pathway (ERAD) for misfolded lumenal proteins by recognizing and binding sugar chains on unfolded glycoproteins that are retrotranslocated into the cytosol and promoting their ubiquitination and subsequent degradation. Prevents formation of cytosolic aggregates of unfolded glycoproteins that have been retrotranslocated into the cytosol. Able to recognize and bind denatured glycoproteins, preferentially those of the high-mannose type. This is F-box only protein 2 (FBXO2) from Homo sapiens (Human).